The following is a 345-amino-acid chain: MTTPTPLSYKDAGVDIDAGNALVNNIKSAVKRTRRPEVMGNLGGFGALCELPTKYKHPVLVSGTDGVGTKLRLAIDYKKHDTVGVDLVAMCVNDLIVSGAEPLFFLDYYATGKLDVETATSVVSGIAEGCFQSGCALIGGETAEMPGMYEGEDYDLAGFCVGVVEKADIIDGTKVKAGDSLIALASSGPHSNGYSLIRKVLEVSKADPQQDLAGKPLIDHLLEPTRIYVKPLLKLIEQSDIHAMAHITGGGFWENIPRVLPDDCKAVVKGDSWKWPVVFDWLMTNGNIAQHEMFLTFNCGVGMVIALPTEKVDAALALLTAEGENAWLIGEIATRQGDEEQVEII.

The protein belongs to the AIR synthase family.

The protein localises to the cytoplasm. It carries out the reaction 2-formamido-N(1)-(5-O-phospho-beta-D-ribosyl)acetamidine + ATP = 5-amino-1-(5-phospho-beta-D-ribosyl)imidazole + ADP + phosphate + H(+). Its pathway is purine metabolism; IMP biosynthesis via de novo pathway; 5-amino-1-(5-phospho-D-ribosyl)imidazole from N(2)-formyl-N(1)-(5-phospho-D-ribosyl)glycinamide: step 2/2. In Shewanella frigidimarina (strain NCIMB 400), this protein is Phosphoribosylformylglycinamidine cyclo-ligase.